A 389-amino-acid polypeptide reads, in one-letter code: Succinate--CoA ligase [ADP-forming] subunit beta (389 aa).

The ATP-grasp domain occupies 9–236 (RDMFEAHGVP…KDAADPLEAK (228 aa)). Residues K45, 52–54 (GRG), A94, and E99 each bind ATP. N191 and D205 together coordinate Mg(2+). Substrate contacts are provided by residues N256 and 318–320 (GIT).

Belongs to the succinate/malate CoA ligase beta subunit family. In terms of assembly, heterotetramer of two alpha and two beta subunits. Mg(2+) serves as cofactor.

It carries out the reaction succinate + ATP + CoA = succinyl-CoA + ADP + phosphate. It catalyses the reaction GTP + succinate + CoA = succinyl-CoA + GDP + phosphate. The protein operates within carbohydrate metabolism; tricarboxylic acid cycle; succinate from succinyl-CoA (ligase route): step 1/1. Succinyl-CoA synthetase functions in the citric acid cycle (TCA), coupling the hydrolysis of succinyl-CoA to the synthesis of either ATP or GTP and thus represents the only step of substrate-level phosphorylation in the TCA. The beta subunit provides nucleotide specificity of the enzyme and binds the substrate succinate, while the binding sites for coenzyme A and phosphate are found in the alpha subunit. The polypeptide is Succinate--CoA ligase [ADP-forming] subunit beta (Arthrobacter sp. (strain FB24)).